A 127-amino-acid chain; its full sequence is Putative membrane protein insertion efficiency factor (127 aa).

The disordered stretch occupies residues aspartate 71–glutamate 106. Basic and acidic residues predominate over residues arginine 88–threonine 98.

It belongs to the UPF0161 family.

Its subcellular location is the cell inner membrane. Functionally, could be involved in insertion of integral membrane proteins into the membrane. The chain is Putative membrane protein insertion efficiency factor from Sorangium cellulosum (strain So ce56) (Polyangium cellulosum (strain So ce56)).